The sequence spans 802 residues: Lon protease (802 aa).

The Lon N-terminal domain maps to 17-209 (LPILPLNNVV…QVLSFLERER (193 aa)). 363–370 (GPPGVGKT) is an ATP binding site. In terms of domain architecture, Lon proteolytic spans 599–780 (EDEVGVVTGL…DEVLPRVLHP (182 aa)). Residues Ser-686 and Lys-729 contribute to the active site.

The protein belongs to the peptidase S16 family. Homohexamer. Organized in a ring with a central cavity.

The protein localises to the cytoplasm. The enzyme catalyses Hydrolysis of proteins in presence of ATP.. Its function is as follows. ATP-dependent serine protease that mediates the selective degradation of mutant and abnormal proteins as well as certain short-lived regulatory proteins. Required for cellular homeostasis and for survival from DNA damage and developmental changes induced by stress. Degrades polypeptides processively to yield small peptide fragments that are 5 to 10 amino acids long. Binds to DNA in a double-stranded, site-specific manner. The sequence is that of Lon protease from Roseiflexus castenholzii (strain DSM 13941 / HLO8).